The sequence spans 412 residues: Alanyl-tRNA editing protein Aarsd1 (412 aa).

The Zn(2+) site is built by His-109 and His-113. The residue at position 174 (Ser-174) is a Phosphoserine. 2 residues coordinate Zn(2+): Cys-209 and His-213.

It belongs to the class-II aminoacyl-tRNA synthetase family. Alax-L subfamily. It depends on Zn(2+) as a cofactor.

It is found in the cytoplasm. Its function is as follows. Functions in trans to edit the amino acid moiety from incorrectly charged tRNA(Ala). The protein is Alanyl-tRNA editing protein Aarsd1 (AARSD1) of Homo sapiens (Human).